The sequence spans 483 residues: CdaA regulatory protein CdaR (483 aa).

The helical transmembrane segment at 9–26 (WAVKIIALLFALLLYVAV) threads the bilayer. YbbR-like domains follow at residues 55–135 (IPVK…TVTI), 143–228 (FPVE…KITV), 237–316 (VPFK…TLHI), and 329–394 (VPIK…VNGP). The segment at 410–483 (LTSKKSNTST…STANSQSSSE (74 aa)) is disordered. Residues 413-430 (KKSNTSTNDNSSNTSGNQ) show a composition bias toward low complexity. Residues 431–454 (DTDKQTNDQKNNQQEDTKNTDKNN) are compositionally biased toward basic and acidic residues.

Interacts with CdaA.

The protein resides in the cell membrane. Upon coexpression in E.coli stimulates the diadenylate cyclase activity of CdaA about 20-fold. In B.subtilis c-di-AMP is a second messenger that mediates growth, DNA repair and cell wall homeostasis; it is toxic when present in excess. This Bacillus subtilis (strain 168) protein is CdaA regulatory protein CdaR.